A 508-amino-acid polypeptide reads, in one-letter code: Cell division protein FtsZ (508 aa).

GTP-binding positions include 24–28 (GAGGN), 111–113 (GTG), Glu-142, Arg-146, and Asp-190. Disordered stretches follow at residues 342 to 389 (IAET…SAPQ) and 428 to 508 (VAEE…RLAN). Low complexity predominate over residues 464-482 (QQASAPQAQARSAQSARPQ).

This sequence belongs to the FtsZ family. Homodimer. Polymerizes to form a dynamic ring structure in a strictly GTP-dependent manner. Interacts directly with several other division proteins.

The protein resides in the cytoplasm. In terms of biological role, essential cell division protein that forms a contractile ring structure (Z ring) at the future cell division site. The regulation of the ring assembly controls the timing and the location of cell division. One of the functions of the FtsZ ring is to recruit other cell division proteins to the septum to produce a new cell wall between the dividing cells. Binds GTP and shows GTPase activity. The polypeptide is Cell division protein FtsZ (Caulobacter vibrioides (strain ATCC 19089 / CIP 103742 / CB 15) (Caulobacter crescentus)).